The primary structure comprises 310 residues: Methionyl-tRNA formyltransferase (310 aa).

A (6S)-5,6,7,8-tetrahydrofolate-binding site is contributed by 109 to 112 (SLLP).

Belongs to the Fmt family.

It carries out the reaction L-methionyl-tRNA(fMet) + (6R)-10-formyltetrahydrofolate = N-formyl-L-methionyl-tRNA(fMet) + (6S)-5,6,7,8-tetrahydrofolate + H(+). Attaches a formyl group to the free amino group of methionyl-tRNA(fMet). The formyl group appears to play a dual role in the initiator identity of N-formylmethionyl-tRNA by promoting its recognition by IF2 and preventing the misappropriation of this tRNA by the elongation apparatus. In Macrococcus caseolyticus (strain JCSC5402) (Macrococcoides caseolyticum), this protein is Methionyl-tRNA formyltransferase.